A 453-amino-acid polypeptide reads, in one-letter code: UDP-N-acetylmuramate--L-alanyl-gamma-D-glutamyl-meso-2,6-diaminoheptandioate ligase (453 aa).

An ATP-binding site is contributed by 111 to 117 (GTHGKTT).

Belongs to the MurCDEF family. Mpl subfamily. The cofactor is Mg(2+).

The catalysed reaction is UDP-N-acetyl-alpha-D-muramate + L-alanyl-gamma-D-glutamyl-meso-2,6-diaminopimelate + ATP = UDP-N-acetyl-alpha-D-muramoyl-L-alanyl-gamma-D-glutamyl-meso-2,6-diaminopimelate + ADP + phosphate + H(+). It participates in cell wall biogenesis; peptidoglycan recycling. Functionally, reutilizes the intact tripeptide L-alanyl-gamma-D-glutamyl-meso-diaminopimelate by linking it to UDP-N-acetylmuramate. The chain is UDP-N-acetylmuramate--L-alanyl-gamma-D-glutamyl-meso-2,6-diaminoheptandioate ligase from Haemophilus influenzae (strain ATCC 51907 / DSM 11121 / KW20 / Rd).